We begin with the raw amino-acid sequence, 142 residues long: Hemoglobin subunit alpha (142 aa).

The region spanning 2 to 142 (VLSSQNKKAI…VAYELSSCYR (141 aa)) is the Globin domain. Histidine 60 serves as a coordination point for O2. Histidine 89 provides a ligand contact to heme b.

The protein belongs to the globin family. In terms of assembly, heterotetramer of two alpha chains and two beta chains. In terms of tissue distribution, red blood cells.

Involved in oxygen transport from gills to the various peripheral tissues. The chain is Hemoglobin subunit alpha (hba) from Hemitrygon akajei (Red stingray).